The chain runs to 1068 residues: Leucine zipper protein 1 (1068 aa).

The residue at position 2 (A2) is an N-acetylalanine. Positions 11 to 354 (ASNRHLRFKL…KLQVRKQKEL (344 aa)) form a coiled coil. Disordered regions lie at residues 251–292 (LSSK…VKDL), 375–402 (TKLK…KRER), and 432–558 (AAKA…QAVE). A compositionally biased stretch (basic and acidic residues) spans 254–292 (KESKRKGSLDYLKQVENETRDKSENEKNRNQEDNKVKDL). Phosphoserine occurs at positions 256, 261, 395, 513, 571, 575, 612, and 660. Residues 510-519 (RTFSDSTHVS) are compositionally biased toward polar residues. A disordered region spans residues 677–700 (TTITPEPEPKPQPNSREKVKSRGG). The residue at position 680 (T680) is a Phosphothreonine. A phosphoserine mark is found at S691 and S746. Residues 782–829 (QKSTSKSVTSKVTSSITIYPSDSSGPRAVPSEAPRERHTSTSNIQVGP) form a disordered region. Over residues 785-796 (TSKSVTSKVTSS) the composition is skewed to low complexity. The tract at residues 834–884 (AISNHVSSPLELSIHKHDITLQLTEAERVGDGSPKNRAEMVVSRSSILIKP) is required for interaction with FLNA. The residue at position 906 (S906) is a Phosphoserine. The interval 924–945 (RDLKCSEDPPTGIGRNMEATNA) is disordered. T952 is subject to Phosphothreonine. Disordered regions lie at residues 959–995 (QPRS…ASEV) and 1033–1068 (NPLE…AEED). The segment covering 984-994 (RRTQSSLTASE) has biased composition (polar residues). S988 carries the phosphoserine modification.

In terms of assembly, component of the CERF-1 ISWI chromatin remodeling complex (also called the CECR2-containing remodeling factor (CERF) complex) at least composed of CECR2 and SMARCA1. Component of the CERF-5 ISWI chromatin remodeling complex at least composed of CECR2 and SMARCA5/SNF2H. LUZP1 is detected as part of the CERF-1 and CERF-5 complexes in embryonic stem (ES) cells where it is involved in complex stabilization but is not detected in the complexes in the testis. Interacts (via C-terminus) with LIMA1/EPLIN; both proteins restrict ciliation and may work together to regulate this process. Interacts with myosin light chain MYL9; the interaction results in inhibition of phosphorylation of MYL9 by DAPK3. Interacts with DAPK3; the interaction is likely to occur throughout the cell cycle and reduces the LUZP1-mediated suppression of MYL9 phosphorylation. Interacts with the chromosomal passenger complex (CPC); CPC kinase activity is required for localization of LUZP1 to the centromere. As to expression, predominantly expressed in the brain (at protein level).

The protein localises to the cytoplasm. Its subcellular location is the cytoskeleton. It localises to the microtubule organizing center. The protein resides in the centrosome. It is found in the cilium basal body. The protein localises to the midbody. Its subcellular location is the chromosome. It localises to the centromere. The protein resides in the spindle. It is found in the stress fiber. The protein localises to the nucleus. Its subcellular location is the cell projection. It localises to the dendrite. The protein resides in the perikaryon. It is found in the cell junction. The protein localises to the tight junction. F-actin cross-linking protein. Stabilizes actin and acts as a negative regulator of primary cilium formation. Positively regulates the phosphorylation of both myosin II and protein phosphatase 1 regulatory subunit PPP1R12A/MYPT1 and promotes the assembly of myosin II stacks within actin stress fibers. Inhibits the phosphorylation of myosin light chain MYL9 by DAPK3 and suppresses the constriction velocity of the contractile ring during cytokinesis. Binds to microtubules and promotes epithelial cell apical constriction by up-regulating levels of diphosphorylated myosin light chain (MLC) through microtubule-dependent inhibition of MLC dephosphorylation by myosin phosphatase. Involved in regulation of cell migration, nuclear size and centriole number, probably through regulation of the actin cytoskeleton. Component of the CERF-1 and CERF-5 chromatin remodeling complexes in embryonic stem cells where it acts to stabilize the complexes. Plays a role in embryonic brain and cardiovascular development. The sequence is that of Leucine zipper protein 1 (Luzp1) from Mus musculus (Mouse).